The chain runs to 383 residues: Dimethylsulfoniopropionate lyase 6 (383 aa).

The protein belongs to the aspartate/glutamate racemases family. ALMA1 subfamily. Homotetramer.

It catalyses the reaction S,S-dimethyl-beta-propiothetin = acrylate + dimethyl sulfide + H(+). In terms of biological role, mediates cleavage of dimethylsulfoniopropionate (DMSP) into dimethyl sulfide (DMS) and acrylate. DMS is the principal form by which sulfur is transported from oceans to the atmosphere and is a key component of the ocean sulfur cycle. The sequence is that of Dimethylsulfoniopropionate lyase 6 from Emiliania huxleyi (strain CCMP1516).